A 159-amino-acid polypeptide reads, in one-letter code: 2-C-methyl-D-erythritol 2,4-cyclodiphosphate synthase (159 aa).

A divalent metal cation is bound by residues aspartate 10 and histidine 12. 4-CDP-2-C-methyl-D-erythritol 2-phosphate-binding positions include 10–12 and 36–37; these read DVH and HS. Histidine 44 contributes to the a divalent metal cation binding site. Residues 58–60, 63–67, and arginine 144 contribute to the 4-CDP-2-C-methyl-D-erythritol 2-phosphate site; these read DIG and FSDTD.

Belongs to the IspF family. As to quaternary structure, homotrimer. It depends on a divalent metal cation as a cofactor.

The enzyme catalyses 4-CDP-2-C-methyl-D-erythritol 2-phosphate = 2-C-methyl-D-erythritol 2,4-cyclic diphosphate + CMP. Its pathway is isoprenoid biosynthesis; isopentenyl diphosphate biosynthesis via DXP pathway; isopentenyl diphosphate from 1-deoxy-D-xylulose 5-phosphate: step 4/6. In terms of biological role, involved in the biosynthesis of isopentenyl diphosphate (IPP) and dimethylallyl diphosphate (DMAPP), two major building blocks of isoprenoid compounds. Catalyzes the conversion of 4-diphosphocytidyl-2-C-methyl-D-erythritol 2-phosphate (CDP-ME2P) to 2-C-methyl-D-erythritol 2,4-cyclodiphosphate (ME-CPP) with a corresponding release of cytidine 5-monophosphate (CMP). The polypeptide is 2-C-methyl-D-erythritol 2,4-cyclodiphosphate synthase (Paraburkholderia phytofirmans (strain DSM 17436 / LMG 22146 / PsJN) (Burkholderia phytofirmans)).